We begin with the raw amino-acid sequence, 346 residues long: Uroporphyrinogen decarboxylase (346 aa).

Substrate is bound by residues 21–25, D71, Y146, S201, and H316; that span reads RQAGR.

This sequence belongs to the uroporphyrinogen decarboxylase family. In terms of assembly, homodimer.

The protein localises to the cytoplasm. The enzyme catalyses uroporphyrinogen III + 4 H(+) = coproporphyrinogen III + 4 CO2. The protein operates within porphyrin-containing compound metabolism; protoporphyrin-IX biosynthesis; coproporphyrinogen-III from 5-aminolevulinate: step 4/4. In terms of biological role, catalyzes the decarboxylation of four acetate groups of uroporphyrinogen-III to yield coproporphyrinogen-III. In Rickettsia massiliae (strain Mtu5), this protein is Uroporphyrinogen decarboxylase.